Consider the following 302-residue polypeptide: ATP synthase mitochondrial F1 complex assembly factor 1 (302 aa).

The protein belongs to the ATP11 family. As to quaternary structure, interacts with ATP5F1B; involved in the assembly of the F1 component of the mitochondrial ATP synthase (ATPase).

The protein localises to the mitochondrion inner membrane. In terms of biological role, has a complex stabilizing activity in the assembly of the mitochondrial F1-F0 complex. In Danio rerio (Zebrafish), this protein is ATP synthase mitochondrial F1 complex assembly factor 1 (atpaf1).